A 149-amino-acid chain; its full sequence is Chromophore lyase CpcS/CpeS homolog (149 aa).

This sequence belongs to the CpcS/CpeS biliprotein lyase family.

The protein localises to the plastid. The protein resides in the chloroplast. Its function is as follows. Might function to covalently attach a chromophore to Cys residue(s) of phycobiliproteins. In Porphyra purpurea (Red seaweed), this protein is Chromophore lyase CpcS/CpeS homolog.